The following is a 493-amino-acid chain: 3-octaprenyl-4-hydroxybenzoate carboxy-lyase (493 aa).

N172 is a binding site for Mn(2+). Prenylated FMN is bound by residues 175–177 (IYR), 189–191 (RWL), and 194–195 (RG). A Mn(2+)-binding site is contributed by E238. The Proton donor role is filled by D287.

The protein belongs to the UbiD family. In terms of assembly, homohexamer. Prenylated FMN is required as a cofactor. Mn(2+) serves as cofactor.

The protein localises to the cell membrane. It carries out the reaction a 4-hydroxy-3-(all-trans-polyprenyl)benzoate + H(+) = a 2-(all-trans-polyprenyl)phenol + CO2. Its pathway is cofactor biosynthesis; ubiquinone biosynthesis. Catalyzes the decarboxylation of 3-octaprenyl-4-hydroxy benzoate to 2-octaprenylphenol, an intermediate step in ubiquinone biosynthesis. The polypeptide is 3-octaprenyl-4-hydroxybenzoate carboxy-lyase (Shewanella baltica (strain OS155 / ATCC BAA-1091)).